Reading from the N-terminus, the 475-residue chain is MKVTLPDFERAGVMVVGDVMLDRYWYGPTSRISPEAPVPVVKVETIEERPGGAANVAMNIASLGASSRLVGLTGIDDAARALSQSLAQVNVKCDFVSVPTHPTITKLRVLSRNQQLIRLDFEEGFDGVDPEPLHERINQALGQIGALVLSDYAKGALASVQQMIQLARKAGVPVLIDPKGTDFERYRGATLLTPNLSEFEAVAGKCKTEQDIVERGMKIIADFDLSALLVTRSEQGMTLLQPGKAPFHLPTQAQEVYDVTGAGDTVIGVLAATLASGNSLEEACFFANAAAGVVVGKLGTSTVSPVELENAVRGRAETGFGVMSEAALKEAVLAARKRGEKVVMTNGVFDILHAGHVSYLANARKLGDRLIVAVNSDASTRRLKGDTRPVNPQEQRMIVLAALEAVDWVVPFEEDTPQRLISEILPDLLVKGGDYKPEDIAGSKEVWANGGDVMVLNFEDGCSTTNIIKKIQKNS.

The ribokinase stretch occupies residues Met1 to Thr318. Residue Asn195–Glu198 participates in ATP binding. Residue Asp264 is part of the active site. A cytidylyltransferase region spans residues Met344–Ser475.

This sequence in the N-terminal section; belongs to the carbohydrate kinase PfkB family. In the C-terminal section; belongs to the cytidylyltransferase family. As to quaternary structure, homodimer.

The enzyme catalyses D-glycero-beta-D-manno-heptose 7-phosphate + ATP = D-glycero-beta-D-manno-heptose 1,7-bisphosphate + ADP + H(+). The catalysed reaction is D-glycero-beta-D-manno-heptose 1-phosphate + ATP + H(+) = ADP-D-glycero-beta-D-manno-heptose + diphosphate. The protein operates within nucleotide-sugar biosynthesis; ADP-L-glycero-beta-D-manno-heptose biosynthesis; ADP-L-glycero-beta-D-manno-heptose from D-glycero-beta-D-manno-heptose 7-phosphate: step 1/4. Its pathway is nucleotide-sugar biosynthesis; ADP-L-glycero-beta-D-manno-heptose biosynthesis; ADP-L-glycero-beta-D-manno-heptose from D-glycero-beta-D-manno-heptose 7-phosphate: step 3/4. Catalyzes the phosphorylation of D-glycero-D-manno-heptose 7-phosphate at the C-1 position to selectively form D-glycero-beta-D-manno-heptose-1,7-bisphosphate. Functionally, catalyzes the ADP transfer from ATP to D-glycero-beta-D-manno-heptose 1-phosphate, yielding ADP-D-glycero-beta-D-manno-heptose. This is Bifunctional protein HldE from Cronobacter sakazakii (strain ATCC BAA-894) (Enterobacter sakazakii).